A 78-amino-acid chain; its full sequence is D-alanyl carrier protein (78 aa).

Positions 1 to 78 (MEFKEQVLDL…KIVEALEELR (78 aa)) constitute a Carrier domain. Ser36 is subject to O-(pantetheine 4'-phosphoryl)serine.

It belongs to the DltC family. 4'-phosphopantetheine is transferred from CoA to a specific serine of apo-DCP.

The protein resides in the cytoplasm. It functions in the pathway cell wall biogenesis; lipoteichoic acid biosynthesis. Its function is as follows. Carrier protein involved in the D-alanylation of lipoteichoic acid (LTA). The loading of thioester-linked D-alanine onto DltC is catalyzed by D-alanine--D-alanyl carrier protein ligase DltA. The DltC-carried D-alanyl group is further transferred to cell membrane phosphatidylglycerol (PG) by forming an ester bond, probably catalyzed by DltD. D-alanylation of LTA plays an important role in modulating the properties of the cell wall in Gram-positive bacteria, influencing the net charge of the cell wall. This Staphylococcus haemolyticus (strain JCSC1435) protein is D-alanyl carrier protein.